The chain runs to 189 residues: Protein GrpE (189 aa).

Residues 1–13 (MSENKQPEQNQDL) show a composition bias toward polar residues. A disordered region spans residues 1 to 35 (MSENKQPEQNQDLTGEPSPEELEAAQAADEFDAMN).

This sequence belongs to the GrpE family. Homodimer.

The protein localises to the cytoplasm. Participates actively in the response to hyperosmotic and heat shock by preventing the aggregation of stress-denatured proteins, in association with DnaK and GrpE. It is the nucleotide exchange factor for DnaK and may function as a thermosensor. Unfolded proteins bind initially to DnaJ; upon interaction with the DnaJ-bound protein, DnaK hydrolyzes its bound ATP, resulting in the formation of a stable complex. GrpE releases ADP from DnaK; ATP binding to DnaK triggers the release of the substrate protein, thus completing the reaction cycle. Several rounds of ATP-dependent interactions between DnaJ, DnaK and GrpE are required for fully efficient folding. The polypeptide is Protein GrpE (Polaromonas naphthalenivorans (strain CJ2)).